An 808-amino-acid polypeptide reads, in one-letter code: Probable inorganic carbon transporter subunit DabA (808 aa).

Cysteine 335, aspartate 337, histidine 497, and cysteine 512 together coordinate Zn(2+).

This sequence belongs to the inorganic carbon transporter (TC 9.A.2) DabA family. As to quaternary structure, forms a complex with DabB. It depends on Zn(2+) as a cofactor.

It localises to the cell inner membrane. Functionally, part of an energy-coupled inorganic carbon pump. The chain is Probable inorganic carbon transporter subunit DabA from Rhodopseudomonas palustris (strain ATCC BAA-98 / CGA009).